We begin with the raw amino-acid sequence, 283 residues long: Pantothenate synthetase (283 aa).

30–37 (MGALHEGH) contributes to the ATP binding site. His37 acts as the Proton donor in catalysis. Gln61 provides a ligand contact to (R)-pantoate. Position 61 (Gln61) interacts with beta-alanine. ATP is bound at residue 147-150 (GEKD). Gln153 serves as a coordination point for (R)-pantoate. ATP is bound by residues Ile176 and 184 to 187 (VSSR).

It belongs to the pantothenate synthetase family. Homodimer.

Its subcellular location is the cytoplasm. It catalyses the reaction (R)-pantoate + beta-alanine + ATP = (R)-pantothenate + AMP + diphosphate + H(+). It participates in cofactor biosynthesis; (R)-pantothenate biosynthesis; (R)-pantothenate from (R)-pantoate and beta-alanine: step 1/1. Functionally, catalyzes the condensation of pantoate with beta-alanine in an ATP-dependent reaction via a pantoyl-adenylate intermediate. In Pelodictyon phaeoclathratiforme (strain DSM 5477 / BU-1), this protein is Pantothenate synthetase.